Reading from the N-terminus, the 228-residue chain is L-ribulose-5-phosphate 4-epimerase UlaF (228 aa).

Residues Gly26–Asn27, Ser43–Gly44, and Ser72–Ser73 each bind substrate. The Zn(2+) site is built by Asp74, His93, and His95. Residue Asp118 is the Proton donor/acceptor of the active site. Zn(2+) is bound at residue His167. The active-site Proton donor/acceptor is Tyr225.

The protein belongs to the aldolase class II family. AraD/FucA subfamily. Zn(2+) serves as cofactor.

It catalyses the reaction L-ribulose 5-phosphate = D-xylulose 5-phosphate. It participates in cofactor degradation; L-ascorbate degradation; D-xylulose 5-phosphate from L-ascorbate: step 4/4. Its function is as follows. Catalyzes the isomerization of L-ribulose 5-phosphate to D-xylulose 5-phosphate. Is involved in the anaerobic L-ascorbate utilization. The chain is L-ribulose-5-phosphate 4-epimerase UlaF from Shigella dysenteriae serotype 1 (strain Sd197).